The chain runs to 468 residues: Ribosomal lysine N-methyltransferase 4 (468 aa).

In terms of domain architecture, SET spans 22-302 (EKIGLNDYRH…KGEQLWNTYG (281 aa)). A disordered region spans residues 188–225 (ISNENEKSAAETSIKEDKNGDAAKKNEGSANQDDEKLH). S-adenosyl-L-methionine is bound at residue Y301.

It belongs to the class V-like SAM-binding methyltransferase superfamily. Histone-lysine methyltransferase family. SETD6 subfamily.

The protein localises to the nucleus. In terms of biological role, S-adenosyl-L-methionine-dependent protein-lysine N-methyltransferase that monomethylates 60S ribosomal protein L42 (rpl42) at 'Lys-55'. The chain is Ribosomal lysine N-methyltransferase 4 from Schizosaccharomyces pombe (strain 972 / ATCC 24843) (Fission yeast).